A 27-amino-acid chain; its full sequence is Protamine-B (27 aa).

A disordered region spans residues 1-27 (ARRRRRSSRPQRRRRRRRHGRRRRGRR).

In terms of tissue distribution, testis.

The protein localises to the nucleus. The protein resides in the chromosome. In terms of biological role, protamines substitute for histones in the chromatin of sperm during the haploid phase of spermatogenesis. They compact sperm DNA into a highly condensed, stable and inactive complex. In Acipenser stellatus (Sevruga), this protein is Protamine-B.